The chain runs to 162 residues: NADH-quinone oxidoreductase subunit I 2 (162 aa).

4Fe-4S ferredoxin-type domains are found at residues 52 to 82 and 93 to 122; these read LRRY…IEAG and VRYD…EGPN. [4Fe-4S] cluster-binding residues include cysteine 62, cysteine 65, cysteine 68, cysteine 72, cysteine 102, cysteine 105, cysteine 108, and cysteine 112.

Belongs to the complex I 23 kDa subunit family. NDH-1 is composed of 14 different subunits. Subunits NuoA, H, J, K, L, M, N constitute the membrane sector of the complex. [4Fe-4S] cluster is required as a cofactor.

It localises to the cell inner membrane. The enzyme catalyses a quinone + NADH + 5 H(+)(in) = a quinol + NAD(+) + 4 H(+)(out). Its function is as follows. NDH-1 shuttles electrons from NADH, via FMN and iron-sulfur (Fe-S) centers, to quinones in the respiratory chain. The immediate electron acceptor for the enzyme in this species is believed to be ubiquinone. Couples the redox reaction to proton translocation (for every two electrons transferred, four hydrogen ions are translocated across the cytoplasmic membrane), and thus conserves the redox energy in a proton gradient. In Rhodopseudomonas palustris (strain BisB5), this protein is NADH-quinone oxidoreductase subunit I 2.